A 106-amino-acid chain; its full sequence is Heat shock protein HspQ (106 aa).

Residues Asp-80–Asn-106 are disordered. Over residues Glu-90 to Gln-100 the composition is skewed to polar residues.

This sequence belongs to the HspQ family.

It is found in the cytoplasm. Functionally, involved in the degradation of certain denaturated proteins, including DnaA, during heat shock stress. This is Heat shock protein HspQ from Proteus mirabilis (strain HI4320).